A 192-amino-acid chain; its full sequence is Dihydrofolate reductase (192 aa).

The DHFR domain maps to 5 to 191 (NVAIIVAALK…FTYNYTLWTR (187 aa)). Residues Ala11 and 18 to 24 (GIGYKGK) each bind NADP(+). 32–37 (EIRYFK) serves as a coordination point for substrate. 56 to 58 (RKT) contributes to the NADP(+) binding site. Arg72 contacts substrate. An NADP(+)-binding site is contributed by 78–80 (SRS). Positions 112 and 118 each coordinate substrate. 113–120 (GGAEIYNE) serves as a coordination point for NADP(+).

It belongs to the dihydrofolate reductase family.

It carries out the reaction (6S)-5,6,7,8-tetrahydrofolate + NADP(+) = 7,8-dihydrofolate + NADPH + H(+). The protein operates within cofactor biosynthesis; tetrahydrofolate biosynthesis; 5,6,7,8-tetrahydrofolate from 7,8-dihydrofolate: step 1/1. Its function is as follows. Key enzyme in folate metabolism. Catalyzes an essential reaction for de novo glycine and purine synthesis, and for DNA precursor synthesis. The sequence is that of Dihydrofolate reductase (DFR1) from Candida albicans (Yeast).